The sequence spans 808 residues: Copal-8-ol diphosphate hydratase, chloroplastic (808 aa).

The transit peptide at 1 to 50 (MAFTFTSAHLFLPVTENHSVHVNYSIPPGNWRLWSTAKGGSNKLDIRRLR) directs the protein to the chloroplast. Residues 190–219 (DKCQKGLKFFRDNISKLEKENVEASAQMLS) are a coiled coil. A substrate-binding site is contributed by Lys-256. 2 residues coordinate Mg(2+): Asp-391 and Asp-393. The short motif at 391–394 (DLDD) is the DXDD motif element. Lys-477 contacts substrate.

The protein belongs to the terpene synthase family. Mg(2+) serves as cofactor. In terms of tissue distribution, expressed in stems, leaves and trichomes. Not detected in roots and seeds. Higher expression in young leaves than in fully expanded leaves.

The protein resides in the plastid. The protein localises to the chloroplast. The catalysed reaction is (2E,6E,10E)-geranylgeranyl diphosphate + H2O = 8-hydroxycopalyl diphosphate. It functions in the pathway secondary metabolite biosynthesis; terpenoid biosynthesis. Functionally, involved in the biosynthesis of oxygen-containing labdane-type diterpenes that may be implicated in direct and indirect defense mechanisms. No activity with geranyl diphosphate or farnesyl diphosphate as substrate. This Cistus creticus subsp. creticus (Rock rose) protein is Copal-8-ol diphosphate hydratase, chloroplastic.